The sequence spans 552 residues: Arginine--tRNA ligase (552 aa).

Positions 129 to 139 (ANPTGPVTLAS) match the 'HIGH' region motif.

The protein belongs to the class-I aminoacyl-tRNA synthetase family. In terms of assembly, monomer.

It localises to the cytoplasm. It carries out the reaction tRNA(Arg) + L-arginine + ATP = L-arginyl-tRNA(Arg) + AMP + diphosphate. In Frankia alni (strain DSM 45986 / CECT 9034 / ACN14a), this protein is Arginine--tRNA ligase.